Consider the following 57-residue polypeptide: Putative secreted protein ML2569.1 (57 aa).

The first 32 residues, 1 to 32 (MSRIVAPAAASVVVGLLLGAATIFGMTLMVQQ), serve as a signal peptide directing secretion. The tract at residues 34-57 (TKPPLPGGDPQSSVLNRVEYGNRT) is disordered.

This chain is Putative secreted protein ML2569.1, found in Mycobacterium leprae (strain TN).